Reading from the N-terminus, the 392-residue chain is MATMQLQRTASLSALVFPNKISTEHQSLMFVKRLLAVSVSCITYLRGIFPERAYGTRYLDDLCVKILKEDKNCPGSSQLVKWMLGCYDALQKKYLRMIILAVYTNPGDPQTISECYQFKFKYTKNGPIMDFISKNQNNKSSTTSADTKKASILLIRKIYVLMQNLGPLPNDVCLTMKLFYYDEVTPPDYQPPGFKDGDCEGVIFDGDPTYLNVGEVPTPFHTFRLKVTTEKERMENIDSTILKPKESKTQFEKILMDKDDVEDENHNNFDIKTKMNEQNENSGASEIKEPNLDCKEEETMQFKKSQSPSISHCQVEQLVSKTSELDVSESKTRSGKIFQSKMVNGNNQQGQTSKENRKRSLRQFRKTVLHVLESSQESVLKKRRVSEPKEHT.

Positions 25–227 (HQSLMFVKRL…TPFHTFRLKV (203 aa)) constitute an HORMA domain. The disordered stretch occupies residues 323 to 359 (SELDVSESKTRSGKIFQSKMVNGNNQQGQTSKENRKR). Polar residues predominate over residues 341–353 (KMVNGNNQQGQTS). Ser-375 is modified (phosphoserine). The Nuclear localization signal signature appears at 381 to 384 (KKRR).

Interacts with HORMAD2. Interacts with IHO1. Post-translationally, phosphorylated at Ser-375 in a SPO11-dependent manner. As to expression, specifically expressed in meiotic germ cells.

It is found in the nucleus. Its subcellular location is the chromosome. The protein localises to the cytoplasm. In terms of biological role, plays a key role in meiotic progression. Regulates 3 different functions during meiosis: ensures that sufficient numbers of processed DNA double-strand breaks (DSBs) are available for successful homology search by increasing the steady-state numbers of single-stranded DSB ends. Promotes synaptonemal-complex formation independently of its role in homology search. Plays a key role in the male mid-pachytene checkpoint and the female meiotic prophase checkpoint: required for efficient build-up of ATR activity on unsynapsed chromosome regions, a process believed to form the basis of meiotic silencing of unsynapsed chromatin (MSUC) and meiotic prophase quality control in both sexes. In Mus musculus (Mouse), this protein is HORMA domain-containing protein 1.